Consider the following 260-residue polypeptide: Indole-3-glycerol phosphate synthase (260 aa).

This sequence belongs to the TrpC family.

It carries out the reaction 1-(2-carboxyphenylamino)-1-deoxy-D-ribulose 5-phosphate + H(+) = (1S,2R)-1-C-(indol-3-yl)glycerol 3-phosphate + CO2 + H2O. It functions in the pathway amino-acid biosynthesis; L-tryptophan biosynthesis; L-tryptophan from chorismate: step 4/5. The chain is Indole-3-glycerol phosphate synthase from Acetivibrio thermocellus (strain ATCC 27405 / DSM 1237 / JCM 9322 / NBRC 103400 / NCIMB 10682 / NRRL B-4536 / VPI 7372) (Clostridium thermocellum).